The following is an 82-amino-acid chain: ATP synthase subunit c (82 aa).

The next 2 membrane-spanning stretches (helical) occupy residues 5 to 25 and 57 to 77; these read IASASVLAAALAIGLAAIGPG and LAFMESLTIYGLVIALVLLFA.

It belongs to the ATPase C chain family. As to quaternary structure, F-type ATPases have 2 components, F(1) - the catalytic core - and F(0) - the membrane proton channel. F(1) has five subunits: alpha(3), beta(3), gamma(1), delta(1), epsilon(1). F(0) has four main subunits: a(1), b(1), b'(1) and c(10-14). The alpha and beta chains form an alternating ring which encloses part of the gamma chain. F(1) is attached to F(0) by a central stalk formed by the gamma and epsilon chains, while a peripheral stalk is formed by the delta, b and b' chains.

The protein resides in the cellular thylakoid membrane. F(1)F(0) ATP synthase produces ATP from ADP in the presence of a proton or sodium gradient. F-type ATPases consist of two structural domains, F(1) containing the extramembraneous catalytic core and F(0) containing the membrane proton channel, linked together by a central stalk and a peripheral stalk. During catalysis, ATP synthesis in the catalytic domain of F(1) is coupled via a rotary mechanism of the central stalk subunits to proton translocation. Functionally, key component of the F(0) channel; it plays a direct role in translocation across the membrane. A homomeric c-ring of between 10-14 subunits forms the central stalk rotor element with the F(1) delta and epsilon subunits. In Cyanothece sp. (strain PCC 7425 / ATCC 29141), this protein is ATP synthase subunit c.